We begin with the raw amino-acid sequence, 535 residues long: Protein translocase subunit SecD (535 aa).

The next 6 membrane-spanning stretches (helical) occupy residues 5–25 (LTWK…GIIG), 377–397 (AIIG…GAGI), 402–421 (SLLL…GAVL), 425–444 (GIAG…VLIF), 469–489 (WLTI…LFLF), and 496–516 (GFAV…VFVS).

Belongs to the SecD/SecF family. SecD subfamily. In terms of assembly, forms a complex with SecF. Part of the essential Sec protein translocation apparatus which comprises SecA, SecYEG and auxiliary proteins SecDF. Other proteins may also be involved.

It is found in the cell inner membrane. Its function is as follows. Part of the Sec protein translocase complex. Interacts with the SecYEG preprotein conducting channel. SecDF uses the proton motive force (PMF) to complete protein translocation after the ATP-dependent function of SecA. In Koribacter versatilis (strain Ellin345), this protein is Protein translocase subunit SecD.